A 143-amino-acid chain; its full sequence is Ribonuclease H (143 aa).

The RNase H type-1 domain maps to 1–136; the sequence is MQEIEIFCDG…CDSLAKLEAQ (136 aa). Mg(2+)-binding residues include Asp-9, Glu-47, Asp-69, and Asp-128.

The protein belongs to the RNase H family. As to quaternary structure, monomer. Mg(2+) serves as cofactor.

It is found in the cytoplasm. It carries out the reaction Endonucleolytic cleavage to 5'-phosphomonoester.. In terms of biological role, endonuclease that specifically degrades the RNA of RNA-DNA hybrids. This chain is Ribonuclease H, found in Helicobacter pylori (strain HPAG1).